Here is a 399-residue protein sequence, read N- to C-terminus: 3-dehydroquinate synthase (399 aa).

The protein belongs to the archaeal-type DHQ synthase family.

It catalyses the reaction 2-amino-2,3,7-trideoxy-D-lyxo-hept-6-ulosonate + NAD(+) + H2O = 3-dehydroquinate + NH4(+) + NADH + H(+). Its function is as follows. Catalyzes the oxidative deamination and cyclization of 2-amino-3,7-dideoxy-D-threo-hept-6-ulosonic acid (ADH) to yield 3-dehydroquinate (DHQ), which is fed into the canonical shikimic pathway of aromatic amino acid biosynthesis. The protein is 3-dehydroquinate synthase of Haloquadratum walsbyi (strain DSM 16790 / HBSQ001).